A 211-amino-acid polypeptide reads, in one-letter code: Large ribosomal subunit protein uL3 (211 aa).

The interval 122–147 (AIKRHGQSRGPMAHGSRYHRRPGSMG) is disordered.

The protein belongs to the universal ribosomal protein uL3 family. Part of the 50S ribosomal subunit. Forms a cluster with proteins L14 and L19.

One of the primary rRNA binding proteins, it binds directly near the 3'-end of the 23S rRNA, where it nucleates assembly of the 50S subunit. In Geobacillus sp. (strain WCH70), this protein is Large ribosomal subunit protein uL3.